Here is a 310-residue protein sequence, read N- to C-terminus: Vomeronasal type-1 receptor 93 (310 aa).

Residues 1–20 (MNKDNTLHVDTIMKITMFSE) are Extracellular-facing. A helical transmembrane segment spans residues 21–41 (VSVGILANSILFFAHLCMLLG). Residues 42–59 (ENKPKPIHLYIASLSLTQ) lie on the Cytoplasmic side of the membrane. A helical membrane pass occupies residues 60 to 80 (LMLLITMGLIAADMFISQGIW). At 81–93 (DSTSCQSLIYLHR) the chain is on the extracellular side. Residues cysteine 85 and cysteine 172 are joined by a disulfide bond. The chain crosses the membrane as a helical span at residues 94-114 (LSRGFTLSAACLLNVFWMITL). At 115–134 (SSKKSRLTKFKHNSPHHISG) the chain is on the cytoplasmic side. The chain crosses the membrane as a helical span at residues 135 to 155 (AFLLLCVLYMCFSSHLILSII). Topologically, residues 156–193 (ATPNLTSDNFMYVTKSCSFLPMCYSRTSMFSTTIAVRE) are extracellular. Asparagine 159 is a glycosylation site (N-linked (GlcNAc...) asparagine). A helical membrane pass occupies residues 194-214 (AFFIGLMALSSGYLVAFLWRH). Over 215-238 (RKQAQHLHSTGLSSKASPEQRATE) the chain is Cytoplasmic. A helical membrane pass occupies residues 239-259 (TILLLMSFFVVLYILENVVFY). At 260 to 269 (SRMKFKDGST) the chain is on the extracellular side. Residues 270 to 290 (FYCVQIIVSHSYATVSSFVFI) traverse the membrane as a helical segment. At 291–310 (FTEKRMTKILRSVCTRIINI) the chain is on the cytoplasmic side.

This sequence belongs to the G-protein coupled receptor 1 family. In terms of tissue distribution, expressed in 1-4% of neurons of the vomeronasal organ. Only one pheromone receptor gene may be expressed in a particular neuron. Not expressed in the main olfactory epithelium.

The protein resides in the cell membrane. Putative pheromone receptor implicated in the regulation of social as well as reproductive behavior. In Rattus norvegicus (Rat), this protein is Vomeronasal type-1 receptor 93 (Vom1r93).